The chain runs to 117 residues: Small ribosomal subunit protein bS6 (117 aa).

The segment at 96 to 117 (HAEGPSVQMQKRDERDSRRERR) is disordered. The segment covering 105–117 (QKRDERDSRRERR) has biased composition (basic and acidic residues).

This sequence belongs to the bacterial ribosomal protein bS6 family.

Its function is as follows. Binds together with bS18 to 16S ribosomal RNA. This is Small ribosomal subunit protein bS6 from Ruegeria pomeroyi (strain ATCC 700808 / DSM 15171 / DSS-3) (Silicibacter pomeroyi).